We begin with the raw amino-acid sequence, 209 residues long: MKKAIMGKKIGMTQIFNEAGKVIPVTVVEAGPCVVVQKKTVEKDGYEAIQVGFGDIREKLVNKPAKGHFEKAGVVLKRTLKEFRLEDVSQYEVGQEIKADVFEIGDKIDVSGVSKGKGFQGVIKRWNQQRGPMTHGSKFKRAPGSMGASSDPSRTFKNKRMPGHMGCVNTTVMNLEVVKVIAEKNLLLIKGGIPGPNKGTVVIRNAVKA.

Residues 130–162 (RGPMTHGSKFKRAPGSMGASSDPSRTFKNKRMP) are disordered.

Belongs to the universal ribosomal protein uL3 family. As to quaternary structure, part of the 50S ribosomal subunit. Forms a cluster with proteins L14 and L19.

Functionally, one of the primary rRNA binding proteins, it binds directly near the 3'-end of the 23S rRNA, where it nucleates assembly of the 50S subunit. This is Large ribosomal subunit protein uL3 from Clostridium botulinum (strain Alaska E43 / Type E3).